Here is a 367-residue protein sequence, read N- to C-terminus: NADH-quinone oxidoreductase subunit D (367 aa).

Belongs to the complex I 49 kDa subunit family. As to quaternary structure, NDH-1 is composed of 14 different subunits. Subunits NuoB, C, D, E, F, and G constitute the peripheral sector of the complex.

It localises to the cell membrane. It catalyses the reaction a quinone + NADH + 5 H(+)(in) = a quinol + NAD(+) + 4 H(+)(out). Its function is as follows. NDH-1 shuttles electrons from NADH, via FMN and iron-sulfur (Fe-S) centers, to quinones in the respiratory chain. The immediate electron acceptor for the enzyme in this species is believed to be a menaquinone. Couples the redox reaction to proton translocation (for every two electrons transferred, four hydrogen ions are translocated across the cytoplasmic membrane), and thus conserves the redox energy in a proton gradient. This is NADH-quinone oxidoreductase subunit D from Geobacillus kaustophilus (strain HTA426).